The following is a 481-amino-acid chain: Abietadienol/abietadienal oxidase (481 aa).

Residues 2 to 22 traverse the membrane as a helical segment; sequence ADQISLLLVVFTAAVALLHLI. Cys-430 serves as a coordination point for heme.

Belongs to the cytochrome P450 family. Heme serves as cofactor. Expressed in young tissues such as flushing buds and green bark tissues. Lower levels in mature needles and bark.

The protein localises to the membrane. It catalyses the reaction abieta-7,13-dien-18-ol + 2 reduced [NADPH--hemoprotein reductase] + 2 O2 = abieta-7,13-dien-18-oate + 2 oxidized [NADPH--hemoprotein reductase] + 3 H2O + 3 H(+). Its function is as follows. Multifunctional and multisubstrate cytochrome P450 that oxidizes the respective carbon 18 of abietadienol, abietadienal, levopimaradienol, isopimara-7,15-dienol, isopimara-7,15-dienal, dehydroabietadienol, and dehydroabietadienal. The polypeptide is Abietadienol/abietadienal oxidase (CYP720B1) (Pinus taeda (Loblolly pine)).